The following is a 94-amino-acid chain: Co-chaperonin GroES (94 aa).

Belongs to the GroES chaperonin family. As to quaternary structure, heptamer of 7 subunits arranged in a ring. Interacts with the chaperonin GroEL.

It localises to the cytoplasm. In terms of biological role, together with the chaperonin GroEL, plays an essential role in assisting protein folding. The GroEL-GroES system forms a nano-cage that allows encapsulation of the non-native substrate proteins and provides a physical environment optimized to promote and accelerate protein folding. GroES binds to the apical surface of the GroEL ring, thereby capping the opening of the GroEL channel. In Parageobacillus thermoglucosidasius (Geobacillus thermoglucosidasius), this protein is Co-chaperonin GroES.